We begin with the raw amino-acid sequence, 377 residues long: Mitochondrial pyrimidine nucleotide transporter RIM2 (377 aa).

3 Solcar repeats span residues 50–163 (VKPW…TKDM), 173–262 (ETPM…MKRL), and 286–375 (KEWC…VIRL). Helical transmembrane passes span 53–73 (WVHFVAGGIGGMAGAVVTCPF), 131–151 (GFRSLFKGLGPNLVGVIPARS), 179–199 (LMAAATAGWATATATNPIWLI), 238–258 (GLSASYLGSVEGILQWLLYEQ), 286–306 (KEWCQRSGSAGLAKFVASIAT), and 347–368 (MYSGLTPHLMRTVPNSIIMFGT).

This sequence belongs to the mitochondrial carrier (TC 2.A.29) family.

The protein resides in the mitochondrion inner membrane. It catalyses the reaction 5-methyl-UTP(out) + UTP(in) = 5-methyl-UTP(in) + UTP(out). Its function is as follows. Mitochondrial transporter that imports/exports pyrimidine nucleotides into and from mitochondria. Selectively transports uridine, thymidine, and cytosine (deoxy)nucleoside di- and triphosphates by an antiport mechanism. Also transports, with lower efficiency, uridine, thymidine, and cytosine (deoxy)nucleoside monophosphates as well as guanosine (deoxy)nucleoside di- and triphosphate. May import (deoxy)nucleoside triphosphates in exchange for intramitochondrial (deoxy)nucleoside monophosphates, thus providing precursors necessary for de novo synthesis of mitochondrial DNA and RNA while exporting products of their catabolism. Mediates the transport of iron and other divalent metal ions like copper and zinc across the mitochondrial inner membrane in a pyrimidine nucleotide-dependent fashion. Catalyzes the co-import of pyrimidine nucleotides and divalent metal ions including ferrous iron. Participates in mitochondrial genome maintenance, regulation of mitochondrial membrane potential and mitochondrial respiration. The chain is Mitochondrial pyrimidine nucleotide transporter RIM2 (RIM2) from Saccharomyces cerevisiae (strain ATCC 204508 / S288c) (Baker's yeast).